Reading from the N-terminus, the 84-residue chain is MRKGSVKEVLAKIKYDPRENEEDYFIIIEHRGSYGNVRKIPVSLIELGHGYFFVGETQIPYHRILKVVRKDGRVVWESRKRGLK.

It belongs to the UPF0248 family.

The sequence is that of UPF0248 protein PF1300 from Pyrococcus furiosus (strain ATCC 43587 / DSM 3638 / JCM 8422 / Vc1).